We begin with the raw amino-acid sequence, 413 residues long: Glucose-1-phosphate adenylyltransferase (413 aa).

Residues Tyr102, Gly167, 182 to 183 (EK), and Ser200 each bind alpha-D-glucose 1-phosphate.

The protein belongs to the bacterial/plant glucose-1-phosphate adenylyltransferase family. In terms of assembly, homotetramer.

It catalyses the reaction alpha-D-glucose 1-phosphate + ATP + H(+) = ADP-alpha-D-glucose + diphosphate. It functions in the pathway glycan biosynthesis; glycogen biosynthesis. Functionally, involved in the biosynthesis of ADP-glucose, a building block required for the elongation reactions to produce glycogen. Catalyzes the reaction between ATP and alpha-D-glucose 1-phosphate (G1P) to produce pyrophosphate and ADP-Glc. This is Glucose-1-phosphate adenylyltransferase from Deinococcus radiodurans (strain ATCC 13939 / DSM 20539 / JCM 16871 / CCUG 27074 / LMG 4051 / NBRC 15346 / NCIMB 9279 / VKM B-1422 / R1).